The following is a 31-amino-acid chain: Cytochrome b6-f complex subunit 6 (31 aa).

A helical membrane pass occupies residues 4–24; sequence ITSYFGFLLAALTITSALFIG.

Belongs to the PetL family. As to quaternary structure, the 4 large subunits of the cytochrome b6-f complex are cytochrome b6, subunit IV (17 kDa polypeptide, PetD), cytochrome f and the Rieske protein, while the 4 small subunits are PetG, PetL, PetM and PetN. The complex functions as a dimer.

Its subcellular location is the plastid. The protein localises to the chloroplast thylakoid membrane. In terms of biological role, component of the cytochrome b6-f complex, which mediates electron transfer between photosystem II (PSII) and photosystem I (PSI), cyclic electron flow around PSI, and state transitions. PetL is important for photoautotrophic growth as well as for electron transfer efficiency and stability of the cytochrome b6-f complex. This chain is Cytochrome b6-f complex subunit 6, found in Solanum tuberosum (Potato).